Consider the following 459-residue polypeptide: Argininosuccinate lyase (459 aa).

This sequence belongs to the lyase 1 family. Argininosuccinate lyase subfamily.

It is found in the cytoplasm. It catalyses the reaction 2-(N(omega)-L-arginino)succinate = fumarate + L-arginine. It functions in the pathway amino-acid biosynthesis; L-arginine biosynthesis; L-arginine from L-ornithine and carbamoyl phosphate: step 3/3. The protein is Argininosuccinate lyase of Photorhabdus laumondii subsp. laumondii (strain DSM 15139 / CIP 105565 / TT01) (Photorhabdus luminescens subsp. laumondii).